The primary structure comprises 211 residues: Arginine exporter protein ArgO (211 aa).

Transmembrane regions (helical) follow at residues 1 to 21, 37 to 57, 68 to 88, 111 to 131, 147 to 167, and 186 to 206; these read MLSYYFQGLVLGAAMILPLGP, LMIAMLCAVSDLLLICAGIFG, LLALVTWGGVAFLLWYGFGAL, IIATMLAVTWLNPHVYLDTFV, WFALGTVSASFLWFFGLALLA, and LVGLVMWFIAFQLAKEGIHHI.

This sequence belongs to the LysE/ArgO transporter (TC 2.A.75) family.

It localises to the cell inner membrane. The catalysed reaction is L-arginine(in) = L-arginine(out). In terms of biological role, involved in the export of arginine. Important to control the intracellular level of arginine and the correct balance between arginine and lysine. This Enterobacter sp. (strain 638) protein is Arginine exporter protein ArgO.